Reading from the N-terminus, the 241-residue chain is Proteasome subunit alpha (241 aa).

This sequence belongs to the peptidase T1A family. As to quaternary structure, the 20S proteasome core is composed of 14 alpha and 14 beta subunits that assemble into four stacked heptameric rings, resulting in a barrel-shaped structure. The two inner rings, each composed of seven catalytic beta subunits, are sandwiched by two outer rings, each composed of seven alpha subunits. The catalytic chamber with the active sites is on the inside of the barrel. Has a gated structure, the ends of the cylinder being occluded by the N-termini of the alpha-subunits. Is capped by the proteasome-associated ATPase, ARC.

It is found in the cytoplasm. Its pathway is protein degradation; proteasomal Pup-dependent pathway. The formation of the proteasomal ATPase ARC-20S proteasome complex, likely via the docking of the C-termini of ARC into the intersubunit pockets in the alpha-rings, may trigger opening of the gate for substrate entry. Interconversion between the open-gate and close-gate conformations leads to a dynamic regulation of the 20S proteasome proteolysis activity. In terms of biological role, component of the proteasome core, a large protease complex with broad specificity involved in protein degradation. The protein is Proteasome subunit alpha of Frankia alni (strain DSM 45986 / CECT 9034 / ACN14a).